The sequence spans 725 residues: Glyoxysomal fatty acid beta-oxidation multifunctional protein MFP-a (725 aa).

This sequence in the N-terminal section; belongs to the enoyl-CoA hydratase/isomerase family. The protein in the central section; belongs to the 3-hydroxyacyl-CoA dehydrogenase family.

It localises to the glyoxysome. The enzyme catalyses a (3S)-3-hydroxyacyl-CoA = a (2E)-enoyl-CoA + H2O. It catalyses the reaction a 4-saturated-(3S)-3-hydroxyacyl-CoA = a (3E)-enoyl-CoA + H2O. It carries out the reaction a (3Z)-enoyl-CoA = a 4-saturated (2E)-enoyl-CoA. The catalysed reaction is a (3E)-enoyl-CoA = a 4-saturated (2E)-enoyl-CoA. The enzyme catalyses (3S)-3-hydroxybutanoyl-CoA = (3R)-3-hydroxybutanoyl-CoA. It catalyses the reaction a (3S)-3-hydroxyacyl-CoA + NAD(+) = a 3-oxoacyl-CoA + NADH + H(+). The protein operates within lipid metabolism; fatty acid beta-oxidation. In Cucumis sativus (Cucumber), this protein is Glyoxysomal fatty acid beta-oxidation multifunctional protein MFP-a.